The following is a 225-amino-acid chain: uncharacterized protein (225 aa).

Residues 1 to 48 (MTQLVTRARSARGSTLGEQPRQDQLDFADHTGTAGDGNDGAAAASGPV) are disordered. A compositionally biased stretch (basic and acidic residues) spans 20 to 29 (PRQDQLDFAD). Residues 64 to 136 (GYRGPSACQI…LHNIRVAVDH (73 aa)) form the HTH merR-type domain. A disordered region spans residues 201–225 (DGGESIAAPEDELASRRKHRDRKIG). Positions 216–225 (RRKHRDRKIG) are enriched in basic residues.

This is an uncharacterized protein from Mycobacterium tuberculosis (strain CDC 1551 / Oshkosh).